Reading from the N-terminus, the 101-residue chain is Apolipoprotein C-II (101 aa).

A signal peptide spans 1 to 22 (MGTRFLLALFLVLLVLGFEVQG). The segment at 66–74 (TVDEKLRDM) is lipid binding. The lipoprotein lipase cofactor stretch occupies residues 78–101 (STAAMSTYAGILTDQVLSMLKGEE).

It belongs to the apolipoprotein C2 family. In terms of processing, proapolipoprotein C-II is synthesized as a sialic acid containing glycoprotein which is subsequently desialylated prior to its proteolytic processing. Proapolipoprotein C-II, the major form found in plasma undergoes proteolytic cleavage of its N-terminal hexapeptide to generate apolipoprotein C-II, which occurs as the minor form in plasma.

The protein localises to the secreted. Functionally, component of chylomicrons, very low-density lipoproteins (VLDL), low-density lipoproteins (LDL), and high-density lipoproteins (HDL) in plasma. Plays an important role in lipoprotein metabolism as an activator of lipoprotein lipase. Both proapolipoprotein C-II and apolipoprotein C-II can activate lipoprotein lipase. This is Apolipoprotein C-II (APOC2) from Aotus nancymaae (Ma's night monkey).